A 312-amino-acid chain; its full sequence is Pyridoxal kinase (312 aa).

At M1 the chain carries N-acetylmethionine. 2 residues coordinate pyridoxal: S12 and T47. T47 is a binding site for pyridoxal 5'-phosphate. The residue at position 59 (S59) is a Phosphoserine. ATP is bound at residue D113. D113 lines the Na(+) pocket. D118 is a binding site for Mg(2+). T148 is a Na(+) binding site. 150–153 is a binding site for ATP; the sequence is NQFE. Position 164 is a phosphoserine (S164). Residue T186 coordinates Na(+). 186 to 187 contacts ATP; sequence TS. At S213 the chain carries Phosphoserine. ATP is bound by residues 226–228 and T233; that span reads VEA. Pyridoxal 5'-phosphate is bound at residue 234-235; that stretch reads GD. The Proton acceptor role is filled by D235. S285 carries the phosphoserine modification.

It belongs to the pyridoxine kinase family. In terms of assembly, homodimer. Zn(2+) serves as cofactor. Requires Mg(2+) as cofactor.

It localises to the cytoplasm. The protein localises to the cytosol. It carries out the reaction pyridoxal + ATP = pyridoxal 5'-phosphate + ADP + H(+). The enzyme catalyses pyridoxamine + ATP = pyridoxamine 5'-phosphate + ADP + H(+). The catalysed reaction is pyridoxine + ATP = pyridoxine 5'-phosphate + ADP + H(+). Its pathway is cofactor metabolism; pyridoxal 5'-phosphate salvage; pyridoxal 5'-phosphate from pyridoxal: step 1/1. The protein operates within cofactor metabolism; pyridoxal 5'-phosphate salvage; pyridoxine 5'-phosphate from pyridoxine: step 1/1. It participates in cofactor metabolism; pyridoxal 5'-phosphate salvage; pyridoxamine 5'-phosphate from pyridoxamine: step 1/1. With respect to regulation, activity is increased in the presence of K(+)or Na(+). Catalyzes the phosphorylation of the dietary vitamin B6 vitamers pyridoxal (PL), pyridoxine (PN) and pyridoxamine (PM) to form pyridoxal 5'-phosphate (PLP), pyridoxine 5'-phosphate (PNP) and pyridoxamine 5'-phosphate (PMP), respectively. PLP is the active form of vitamin B6, and acts as a cofactor for over 140 different enzymatic reactions. The chain is Pyridoxal kinase from Mus musculus (Mouse).